We begin with the raw amino-acid sequence, 396 residues long: MSRPQRISVLGATGSIGLSTLDVVQRHPDRYEAFALTGFSRLAELEALCLRHRPVYAVVPEQAAAIALQGSLAAAGIRTRVLFGEQALCEVASAPEVDMVMAAIVGAAGLPSTLAAVEAGKRVLLANKEALVMSGALFMQAVKRSGAVLLPIDSEHNAIFQSLPRNYADGLERVGVRRILLTASGGPFRETPLEQLASVTPEQACAHPNWSMGRKISVDSASMMNKGLELIEACWLFDAQPSQVEVVIHPQSVIHSMVDYVDGSVIAQLGNPDMRTPISYAMAWPERIDSGVSPLDMFAVGRLDFQRPDEQRFPCLRLASQAAETGGSAPAMLNAANEVAVAAFLERHIRFSDIAVIIEDVLNREAVTAVESLDQVLAADRRARSVAGQWLTRHAG.

Residues Thr-13, Gly-14, Ser-15, Ile-16, and Asn-127 each coordinate NADPH. Lys-128 serves as a coordination point for 1-deoxy-D-xylulose 5-phosphate. Glu-129 is an NADPH binding site. Asp-153 serves as a coordination point for Mn(2+). 1-deoxy-D-xylulose 5-phosphate is bound by residues Ser-154, Glu-155, Ser-184, and His-207. Position 155 (Glu-155) interacts with Mn(2+). Gly-213 provides a ligand contact to NADPH. Positions 220, 225, 226, and 229 each coordinate 1-deoxy-D-xylulose 5-phosphate. Glu-229 serves as a coordination point for Mn(2+).

It belongs to the DXR family. Mg(2+) serves as cofactor. Mn(2+) is required as a cofactor.

It carries out the reaction 2-C-methyl-D-erythritol 4-phosphate + NADP(+) = 1-deoxy-D-xylulose 5-phosphate + NADPH + H(+). It functions in the pathway isoprenoid biosynthesis; isopentenyl diphosphate biosynthesis via DXP pathway; isopentenyl diphosphate from 1-deoxy-D-xylulose 5-phosphate: step 1/6. Inhibited by fosmidomycin and 3-(N-acetyl-N-hydroxyamino)-propylphosphonic acid (FR-900098). Catalyzes the NADPH-dependent rearrangement and reduction of 1-deoxy-D-xylulose-5-phosphate (DXP) to 2-C-methyl-D-erythritol 4-phosphate (MEP). The protein is 1-deoxy-D-xylulose 5-phosphate reductoisomerase of Pseudomonas aeruginosa (strain ATCC 15692 / DSM 22644 / CIP 104116 / JCM 14847 / LMG 12228 / 1C / PRS 101 / PAO1).